The following is a 1212-amino-acid chain: Myosin-1 (1212 aa).

Positions 1–35 (MGITRRGKDKAAAGQAVAGGASGGRARPKKATFET) are disordered. In terms of domain architecture, Myosin motor spans 41–715 (VGVSDLTLLS…TLFALEHMRD (675 aa)). 134 to 141 (GESGAGKT) is a binding site for ATP. An actin-binding region spans residues 405-487 (SVGILDIYGF…PGVFSALKDA (83 aa)). IQ domains lie at 719–739 (HNMATRIQRMWRAYLAYRAES) and 740–765 (ATRIQTFWRKKRTGAEYLQLRDHGHR). The 190-residue stretch at 773-962 (RRRMSILGSR…AVHTQQGEPP (190 aa)) folds into the TH1 domain. 2 disordered regions span residues 947–1064 (DFYK…APPA) and 1115–1212 (PAAY…DDDW). Positions 954-966 (VHTQQGEPPNSVS) are enriched in polar residues. Low complexity-rich tracts occupy residues 987-998 (RPGGPNGRPARG) and 1008-1052 (PGGA…ASVR). The span at 1053 to 1062 (APPPPPPAAP) shows a compositional bias: pro residues. The 60-residue stretch at 1065-1124 (KAKIMAKVLYDFAGQKENEMSIKEGDLIEIVQKENNGWWLAKSGNQQAWVPAAYVEEQKQ) folds into the SH3 domain. Over residues 1125 to 1140 (APPPVAASRPPPPAPP) the composition is skewed to pro residues. A compositionally biased stretch (polar residues) spans 1171–1190 (MSLNGSDGSRSNTPTPSLGN).

Belongs to the TRAFAC class myosin-kinesin ATPase superfamily. Myosin family.

The protein localises to the cytoplasm. The protein resides in the cytoskeleton. Its subcellular location is the actin patch. Type-I myosin implicated in the organization of the actin cytoskeleton. Required for proper actin cytoskeleton polarization. At the cell cortex, assembles in patch-like structures together with proteins from the actin-polymerizing machinery and promotes actin assembly. Functions as actin nucleation-promoting factor (NPF) for the Arp2/3 complex. In Pyricularia oryzae (strain 70-15 / ATCC MYA-4617 / FGSC 8958) (Rice blast fungus), this protein is Myosin-1 (MYO1).